A 197-amino-acid chain; its full sequence is Probable proteasome subunit beta type-4 (197 aa).

The protein belongs to the peptidase T1B family. The 26S proteasome consists of a 20S proteasome core and two 19S regulatory subunits. The 20S proteasome core is composed of 28 subunits that are arranged in four stacked rings, resulting in a barrel-shaped structure. The two end rings are each formed by seven alpha subunits, and the two central rings are each formed by seven beta subunits. The catalytic chamber with the active sites is on the inside of the barrel.

Its subcellular location is the cytoplasm. It is found in the nucleus. Non-catalytic component of the proteasome which degrades poly-ubiquitinated proteins in the cytoplasm and in the nucleus. It is essential for the regulated turnover of proteins and for the removal of misfolded proteins. The proteasome is a multicatalytic proteinase complex that is characterized by its ability to cleave peptides with Arg, Phe, Tyr, Leu, and Glu adjacent to the leaving group at neutral or slightly basic pH. It has an ATP-dependent proteolytic activity. In Encephalitozoon cuniculi (strain GB-M1) (Microsporidian parasite), this protein is Probable proteasome subunit beta type-4 (PRE1).